Consider the following 147-residue polypeptide: uncharacterized protein (147 aa).

4Fe-4S ferredoxin-type domains follow at residues 80–109 and 110–141; these read WYPKIDYNRCKNCEKCISFCPRGVYDAENG and KVVVKYPYSCIVNCNACSIMCCENNAIIFPDE. The [4Fe-4S] cluster site is built by C89, C92, C95, C99, C119, C123, C126, and C130.

It depends on [4Fe-4S] cluster as a cofactor.

This is an uncharacterized protein from Methanocaldococcus jannaschii (strain ATCC 43067 / DSM 2661 / JAL-1 / JCM 10045 / NBRC 100440) (Methanococcus jannaschii).